We begin with the raw amino-acid sequence, 396 residues long: Tryptophan synthase beta chain (396 aa).

Lys-88 is modified (N6-(pyridoxal phosphate)lysine).

This sequence belongs to the TrpB family. In terms of assembly, tetramer of two alpha and two beta chains. It depends on pyridoxal 5'-phosphate as a cofactor.

It carries out the reaction (1S,2R)-1-C-(indol-3-yl)glycerol 3-phosphate + L-serine = D-glyceraldehyde 3-phosphate + L-tryptophan + H2O. It participates in amino-acid biosynthesis; L-tryptophan biosynthesis; L-tryptophan from chorismate: step 5/5. Its function is as follows. The beta subunit is responsible for the synthesis of L-tryptophan from indole and L-serine. This chain is Tryptophan synthase beta chain, found in Leptospira biflexa serovar Patoc (strain Patoc 1 / Ames).